Consider the following 525-residue polypeptide: Arylsulfatase G (525 aa).

The first 16 residues, 1–16, serve as a signal peptide directing secretion; sequence MGWLFLKVLLVGMAFS. Residues Asp-44, Asp-45, and Cys-84 each contribute to the Ca(2+) site. The active-site Nucleophile is the Cys-84. The residue at position 84 (Cys-84) is a 3-oxoalanine (Cys). Asn-117 is a glycosylation site (N-linked (GlcNAc...) asparagine). Lys-137 contributes to the substrate binding site. The active site involves His-139. Ser-162 serves as a coordination point for substrate. An N-linked (GlcNAc...) asparagine glycan is attached at Asn-215. His-251 lines the substrate pocket. The Ca(2+) site is built by Asp-302 and Asn-303. Residues Asn-356 and Asn-497 are each glycosylated (N-linked (GlcNAc...) asparagine).

Belongs to the sulfatase family. It depends on Ca(2+) as a cofactor. In terms of processing, N-glycosylated with both high mannose and complex type sugars. Post-translationally, the conversion to 3-oxoalanine (also known as C-formylglycine, FGly), of a serine or cysteine residue in prokaryotes and of a cysteine residue in eukaryotes, is critical for catalytic activity. The 63-kDa precursor undergoes proteolytic processing in two steps, yielding two fragments in the first step (apparent molecular masses of 44 and 18 kDa). In the second step, the 44-kDa fragment is processed further to the 34- and 10-kDa chains. The 10-kDa chain is a cleavage product of the 44-kDa fragment but linked to the 18-kDa chain through a disulfide bridge. In terms of tissue distribution, highly expressed in the spleen, kidney, liver, brain, and testis (at protein level).

Its subcellular location is the lysosome. It catalyses the reaction an aryl sulfate + H2O = a phenol + sulfate + H(+). The enzyme catalyses Hydrolysis of the 3-sulfate groups of the N-sulfo-D-glucosamine 3-O-sulfate units of heparin.. Functionally, displays arylsulfatase activity at acidic pH towards the artificial substrate p-nitrocatechol sulfate. Catalyzes the hydrolysis of the 3-sulfate groups of the N-sulfo-D-glucosamine 3-O-sulfate units of heparin. The chain is Arylsulfatase G (Arsg) from Mus musculus (Mouse).